The sequence spans 210 residues: Histidine biosynthesis bifunctional protein HisIE (210 aa).

A phosphoribosyl-AMP cyclohydrolase region spans residues M1–S106. Positions V107–W210 are phosphoribosyl-ATP pyrophosphohydrolase.

This sequence in the N-terminal section; belongs to the PRA-CH family. The protein in the C-terminal section; belongs to the PRA-PH family.

Its subcellular location is the cytoplasm. The enzyme catalyses 1-(5-phospho-beta-D-ribosyl)-ATP + H2O = 1-(5-phospho-beta-D-ribosyl)-5'-AMP + diphosphate + H(+). It carries out the reaction 1-(5-phospho-beta-D-ribosyl)-5'-AMP + H2O = 1-(5-phospho-beta-D-ribosyl)-5-[(5-phospho-beta-D-ribosylamino)methylideneamino]imidazole-4-carboxamide. Its pathway is amino-acid biosynthesis; L-histidine biosynthesis; L-histidine from 5-phospho-alpha-D-ribose 1-diphosphate: step 2/9. The protein operates within amino-acid biosynthesis; L-histidine biosynthesis; L-histidine from 5-phospho-alpha-D-ribose 1-diphosphate: step 3/9. This Staphylococcus aureus (strain COL) protein is Histidine biosynthesis bifunctional protein HisIE (hisI).